A 497-amino-acid chain; its full sequence is Probable malate:quinone oxidoreductase (497 aa).

The protein belongs to the MQO family. The cofactor is FAD.

It catalyses the reaction (S)-malate + a quinone = a quinol + oxaloacetate. Its pathway is carbohydrate metabolism; tricarboxylic acid cycle; oxaloacetate from (S)-malate (quinone route): step 1/1. The protein is Probable malate:quinone oxidoreductase of Prochlorococcus marinus (strain MIT 9515).